Consider the following 134-residue polypeptide: MGKDTIADIITSIRNADMNRKGTVRIRSTNITESIVKILLREGFIENVRKHRENNQYFLILTLRHKRNKKESYKTILNLKRISRPGLRIYSNSQRIPRILGGIGIVILSTSQGIMTDREARRKSIGGEILCYIW.

The protein belongs to the universal ribosomal protein uS8 family. As to quaternary structure, part of the 30S ribosomal subunit.

Its subcellular location is the plastid. The protein localises to the chloroplast. In terms of biological role, one of the primary rRNA binding proteins, it binds directly to 16S rRNA central domain where it helps coordinate assembly of the platform of the 30S subunit. This Lepidium virginicum (Virginia pepperweed) protein is Small ribosomal subunit protein uS8c (rps8).